Here is a 256-residue protein sequence, read N- to C-terminus: Trypsin alpha (256 aa).

Residues Met1 to Gly22 form the signal peptide. A propeptide spans Leu23–Arg30 (activation peptide). The 224-residue stretch at Ile31–Asn254 folds into the Peptidase S1 domain. A disulfide bridge links Cys56 with Cys72. Active-site charge relay system residues include His71 and Asp116. 2 disulfide bridges follow: Cys180–Cys197 and Cys206–Cys230. Residue Ser210 is the Charge relay system of the active site.

This sequence belongs to the peptidase S1 family. As to expression, synthesized in the midgut of both larvae and adults, primarily in the ventriculus and gastric caeca.

It is found in the secreted. It localises to the extracellular space. The catalysed reaction is Preferential cleavage: Arg-|-Xaa, Lys-|-Xaa.. The protein is Trypsin alpha (alphaTry) of Drosophila melanogaster (Fruit fly).